A 309-amino-acid polypeptide reads, in one-letter code: ADP-L-glycero-D-manno-heptose-6-epimerase (309 aa).

NADP(+) is bound by residues 10–11 (FI), 31–32 (DN), lysine 38, lysine 53, 75–79 (LGACS), and asparagine 92. The active-site Proton acceptor is tyrosine 140. Position 144 (lysine 144) interacts with NADP(+). Residue asparagine 169 participates in substrate binding. NADP(+) contacts are provided by valine 170 and lysine 178. Residue lysine 178 is the Proton acceptor of the active site. Residues serine 180, histidine 187, 201–204 (FLGS), arginine 209, and tyrosine 272 contribute to the substrate site.

This sequence belongs to the NAD(P)-dependent epimerase/dehydratase family. HldD subfamily. As to quaternary structure, homopentamer. NADP(+) is required as a cofactor.

It carries out the reaction ADP-D-glycero-beta-D-manno-heptose = ADP-L-glycero-beta-D-manno-heptose. Its pathway is nucleotide-sugar biosynthesis; ADP-L-glycero-beta-D-manno-heptose biosynthesis; ADP-L-glycero-beta-D-manno-heptose from D-glycero-beta-D-manno-heptose 7-phosphate: step 4/4. Functionally, catalyzes the interconversion between ADP-D-glycero-beta-D-manno-heptose and ADP-L-glycero-beta-D-manno-heptose via an epimerization at carbon 6 of the heptose. The protein is ADP-L-glycero-D-manno-heptose-6-epimerase of Hamiltonella defensa subsp. Acyrthosiphon pisum (strain 5AT).